We begin with the raw amino-acid sequence, 125 residues long: Holo-[acyl-carrier-protein] synthase (125 aa).

The Mg(2+) site is built by Asp8 and Glu57.

This sequence belongs to the P-Pant transferase superfamily. AcpS family. Mg(2+) is required as a cofactor.

It localises to the cytoplasm. The catalysed reaction is apo-[ACP] + CoA = holo-[ACP] + adenosine 3',5'-bisphosphate + H(+). In terms of biological role, transfers the 4'-phosphopantetheine moiety from coenzyme A to a Ser of acyl-carrier-protein. In Aromatoleum aromaticum (strain DSM 19018 / LMG 30748 / EbN1) (Azoarcus sp. (strain EbN1)), this protein is Holo-[acyl-carrier-protein] synthase.